The chain runs to 238 residues: Ribonuclease HII (238 aa).

The RNase H type-2 domain maps to 12–197 (GIVAGVDEAG…VLELLTDDLL (186 aa)). A divalent metal cation-binding residues include Asp-18, Glu-19, and Asp-107.

Belongs to the RNase HII family. Requires Mn(2+) as cofactor. Mg(2+) is required as a cofactor.

The protein resides in the cytoplasm. The enzyme catalyses Endonucleolytic cleavage to 5'-phosphomonoester.. Endonuclease that specifically degrades the RNA of RNA-DNA hybrids. This chain is Ribonuclease HII (rnhB), found in Thermotoga maritima (strain ATCC 43589 / DSM 3109 / JCM 10099 / NBRC 100826 / MSB8).